A 188-amino-acid chain; its full sequence is Pyridoxal 5'-phosphate synthase subunit PdxT (188 aa).

L-glutamine is bound at residue 46–48 (GES). Cys78 (nucleophile) is an active-site residue. L-glutamine contacts are provided by residues Arg105 and 134-135 (IR). Active-site charge relay system residues include His170 and Glu172.

The protein belongs to the glutaminase PdxT/SNO family. In the presence of PdxS, forms a dodecamer of heterodimers. Only shows activity in the heterodimer.

It carries out the reaction aldehydo-D-ribose 5-phosphate + D-glyceraldehyde 3-phosphate + L-glutamine = pyridoxal 5'-phosphate + L-glutamate + phosphate + 3 H2O + H(+). The enzyme catalyses L-glutamine + H2O = L-glutamate + NH4(+). It functions in the pathway cofactor biosynthesis; pyridoxal 5'-phosphate biosynthesis. Functionally, catalyzes the hydrolysis of glutamine to glutamate and ammonia as part of the biosynthesis of pyridoxal 5'-phosphate. The resulting ammonia molecule is channeled to the active site of PdxS. In Clostridium kluyveri (strain ATCC 8527 / DSM 555 / NBRC 12016 / NCIMB 10680 / K1), this protein is Pyridoxal 5'-phosphate synthase subunit PdxT.